A 210-amino-acid chain; its full sequence is MSKIVFCDFDGTITAVETFAGMLKEFAPDLSAQIMPQMYARTLTLRRGVRQLLESIPSQKYADILAYAESKPIRPGLAEFLAFLQEQSIPFIIISGGIQGMIETVLKREGLLDKVTAIYGVNLHTQGEYLQVHSDWENETELVAKALIMAKYSGVETIAIGDSVTDITMARRADLVFARDRLIDYLQAENQPYIPWDNFFEIREYLLLRD.

The protein belongs to the HAD-like hydrolase superfamily. MtnX family.

It catalyses the reaction 2-hydroxy-5-methylsulfanyl-3-oxopent-1-enyl phosphate + H2O = 1,2-dihydroxy-5-(methylsulfanyl)pent-1-en-3-one + phosphate. It functions in the pathway amino-acid biosynthesis; L-methionine biosynthesis via salvage pathway; L-methionine from S-methyl-5-thio-alpha-D-ribose 1-phosphate: step 4/6. Functionally, dephosphorylates 2-hydroxy-3-keto-5-methylthiopentenyl-1-phosphate (HK-MTPenyl-1-P) yielding 1,2-dihydroxy-3-keto-5-methylthiopentene (DHK-MTPene). In Microcystis aeruginosa (strain NIES-843 / IAM M-2473), this protein is 2-hydroxy-3-keto-5-methylthiopentenyl-1-phosphate phosphatase.